The following is a 313-amino-acid chain: Olfactory receptor 5H1 (313 aa).

The Extracellular segment spans residues 1–28; sequence MEEENATLLTEFVLTGFLYQPQWKIPLF. Asn-5 is a glycosylation site (N-linked (GlcNAc...) asparagine). The chain crosses the membrane as a helical span at residues 29 to 49; that stretch reads LAFLVIYLITIMGNLGLIAVI. Over 50-56 the chain is Cytoplasmic; the sequence is WKDPHLH. A helical transmembrane segment spans residues 57–77; sequence IPMYLLLGNLAFVDAWISSTV. Topologically, residues 78 to 98 are extracellular; it reads TPKMLNNFLAKSKMISLSECK. Cys-97 and Cys-179 are joined by a disulfide. Residues 99-119 traverse the membrane as a helical segment; sequence IQFFSFAISVTTECFLLATMA. Residues 120 to 143 lie on the Cytoplasmic side of the membrane; that stretch reads YDRYVAICKPLLYPAIMTNGLCIR. A helical transmembrane segment spans residues 144 to 164; the sequence is LLILSYVGGILHALIHEGFLF. Over 165–195 the chain is Extracellular; the sequence is RLTFCNSNIVHHIYCDTIPLSKISCTDSSIN. A helical membrane pass occupies residues 196-216; that stretch reads FLMVFIFSGSIQVFSIVTILV. Residues 217–240 lie on the Cytoplasmic side of the membrane; the sequence is SYTFVLFAILKKKSDKGVRKAFST. The helical transmembrane segment at 241–261 threads the bilayer; that stretch reads CGAHLFSVSLYYGPLLFIYVG. Over 262-271 the chain is Extracellular; the sequence is PASPQADDQD. The helical transmembrane segment at 272–292 threads the bilayer; the sequence is MVEPLFYTVIIPLLNPIIYSL. Residues 293–313 lie on the Cytoplasmic side of the membrane; it reads RNKQVTVSFTKMLKKHVKVSY.

This sequence belongs to the G-protein coupled receptor 1 family.

It localises to the cell membrane. Functionally, odorant receptor. This Homo sapiens (Human) protein is Olfactory receptor 5H1 (OR5H1).